Reading from the N-terminus, the 109-residue chain is MLVGSQLIEIVIDSLRYENLKEILDEMFRDEVQKLKYFLEDVKEEDEELYNKIVDALKLFKENYEIEDIKIPKKIRVFLVKNNILFLNPQKGSLKPQSYLVWNAIKMLL.

It belongs to the archaeal ATPase family.

This is an uncharacterized protein from Methanocaldococcus jannaschii (strain ATCC 43067 / DSM 2661 / JAL-1 / JCM 10045 / NBRC 100440) (Methanococcus jannaschii).